Reading from the N-terminus, the 367-residue chain is Phosphoribosylaminoimidazole-succinocarboxamide synthase (367 aa).

Belongs to the SAICAR synthetase family.

The enzyme catalyses 5-amino-1-(5-phospho-D-ribosyl)imidazole-4-carboxylate + L-aspartate + ATP = (2S)-2-[5-amino-1-(5-phospho-beta-D-ribosyl)imidazole-4-carboxamido]succinate + ADP + phosphate + 2 H(+). It participates in purine metabolism; IMP biosynthesis via de novo pathway; 5-amino-1-(5-phospho-D-ribosyl)imidazole-4-carboxamide from 5-amino-1-(5-phospho-D-ribosyl)imidazole-4-carboxylate: step 1/2. The protein is Phosphoribosylaminoimidazole-succinocarboxamide synthase of Shewanella amazonensis (strain ATCC BAA-1098 / SB2B).